Here is a 358-residue protein sequence, read N- to C-terminus: Tripartite motif-containing protein 54 (358 aa).

An RING-type zinc finger spans residues 26–82 (CPICLEMFSKPVVILPCQHNLCRKCANDVFQASNPLWQSRGSTTVSSGGRFRCPSCR). The B box-type zinc finger occupies 121–163 (EQHLMCEEHEEEKINIYCLSCEVPTCSLCKVFGAHKDCEVAPL). Zn(2+) contacts are provided by cysteine 126, histidine 129, cysteine 149, and histidine 155. The tract at residues 168–211 (KRQKSELSDGIAMLVAGNDRVQAVITQMEEVCQTIEDNSRRQKQ) is mediates microtubule-binding and homooligomerization. Residues 194 to 258 (QMEEVCQTIE…LIRQYGDHLE (65 aa)) are a coiled coil. The COS domain maps to 271–329 (MEEPQMALYLQQAKELINKVGAMSKVELAGRPEPGYESMEQFTVSVEHVAEMLRTIDFQ). The disordered stretch occupies residues 326–358 (IDFQPGASGEEEEVAPDGDEGSAGQEEERPDGP). A compositionally biased stretch (acidic residues) spans 334–345 (GEEEEVAPDGDE).

Homooligomer and heterooligomer. Interacts with TRIM63 and probably with TRIM55. Interacts with tubulin.

It is found in the cytoplasm. It localises to the cytoskeleton. The protein localises to the myofibril. Its subcellular location is the sarcomere. The protein resides in the z line. In terms of biological role, may bind and stabilize microtubules during myotubes formation. The protein is Tripartite motif-containing protein 54 (TRIM54) of Pongo abelii (Sumatran orangutan).